We begin with the raw amino-acid sequence, 375 residues long: Actin, cytoplasmic (375 aa).

The protein belongs to the actin family.

The protein localises to the cytoplasm. It localises to the cytoskeleton. The catalysed reaction is ATP + H2O = ADP + phosphate + H(+). Actins are highly conserved proteins that are involved in various types of cell motility and are ubiquitously expressed in all eukaryotic cells. This chain is Actin, cytoplasmic, found in Oxytricha trifallax (Sterkiella histriomuscorum).